The chain runs to 626 residues: Probable serine/threonine-protein kinase CCRP1 (626 aa).

The 256-residue stretch at 36–291 (YSKGRMLGKG…LDEILQHPFL (256 aa)) folds into the Protein kinase domain. Residues 42–50 (LGKGGFAKC) and K65 each bind ATP. S71 is subject to Phosphoserine. D159 functions as the Proton acceptor in the catalytic mechanism. Residues 399-433 (NFTKTGSWQSNLNGTQSVKGSSRPQTVQQKGDLKS) are disordered. Polar residues predominate over residues 400–427 (FTKTGSWQSNLNGTQSVKGSSRPQTVQQ). POLO box domains follow at residues 471–554 (WVKK…YLEG) and 574–626 (YVKK…PISP).

The protein belongs to the protein kinase superfamily. Ser/Thr protein kinase family. CDC5/Polo subfamily. Embryo.

The catalysed reaction is L-seryl-[protein] + ATP = O-phospho-L-seryl-[protein] + ADP + H(+). It catalyses the reaction L-threonyl-[protein] + ATP = O-phospho-L-threonyl-[protein] + ADP + H(+). Its function is as follows. May play a role in the division of some cell types. The polypeptide is Probable serine/threonine-protein kinase CCRP1 (CCRP1) (Zea mays (Maize)).